The sequence spans 301 residues: Phosphonates import ATP-binding protein PhnC (301 aa).

The region spanning 8-256 (IRIERLSKTF…LLKTLYGDEA (249 aa)) is the ABC transporter domain. 41-48 (GASGSGKS) contributes to the ATP binding site. Residues 264–287 (AQGPDDTESKNTADNTPLQDAAPA) form a disordered region.

This sequence belongs to the ABC transporter superfamily. Phosphonates importer (TC 3.A.1.9.1) family. The complex is composed of two ATP-binding proteins (PhnC), two transmembrane proteins (PhnE) and a solute-binding protein (PhnD).

Its subcellular location is the cell inner membrane. The enzyme catalyses phosphonate(out) + ATP + H2O = phosphonate(in) + ADP + phosphate + H(+). Its function is as follows. Part of the ABC transporter complex PhnCDE involved in phosphonates import. Responsible for energy coupling to the transport system. This chain is Phosphonates import ATP-binding protein PhnC, found in Paraburkholderia xenovorans (strain LB400).